The primary structure comprises 238 residues: Transcription termination/antitermination protein NusG (238 aa).

This sequence belongs to the NusG family.

Functionally, participates in transcription elongation, termination and antitermination. In Mycobacterium tuberculosis (strain CDC 1551 / Oshkosh), this protein is Transcription termination/antitermination protein NusG.